We begin with the raw amino-acid sequence, 233 residues long: Auxin-responsive protein IAA11 (233 aa).

Disordered regions lie at residues 1–27 (MAGL…RSSG) and 46–100 (PAAV…PKAQ). The EAR-like (transcriptional repression) signature appears at 11–15 (LRLGL). A compositionally biased stretch (acidic residues) spans 54–63 (GAQEDKEDAD). The PB1 domain maps to 122-217 (AALVKVSMDG…SCKRLRIMKG (96 aa)).

Belongs to the Aux/IAA family. Homodimers and heterodimers. In terms of tissue distribution, highly expressed in etiolated shoots. Expressed in roots.

It is found in the nucleus. Functionally, aux/IAA proteins are short-lived transcriptional factors that function as repressors of early auxin response genes at low auxin concentrations. The polypeptide is Auxin-responsive protein IAA11 (IAA11) (Oryza sativa subsp. japonica (Rice)).